Here is a 393-residue protein sequence, read N- to C-terminus: tRNA (guanine-N(7)-)-methyltransferase (393 aa).

Residues E124, E149, and D176 each contribute to the S-adenosyl-L-methionine site. D232 provides a ligand contact to substrate.

This sequence belongs to the class I-like SAM-binding methyltransferase superfamily. TrmB family.

The catalysed reaction is guanosine(46) in tRNA + S-adenosyl-L-methionine = N(7)-methylguanosine(46) in tRNA + S-adenosyl-L-homocysteine. Its pathway is tRNA modification; N(7)-methylguanine-tRNA biosynthesis. Functionally, catalyzes the formation of N(7)-methylguanine at position 46 (m7G46) in tRNA. This Helicobacter pylori (strain HPAG1) protein is tRNA (guanine-N(7)-)-methyltransferase.